The chain runs to 621 residues: Lamin-C (621 aa).

A disordered region spans residues 1–47 (MSARRVTLNTRVSRASTSTPVGGASTSSRVGATSPTSPTRTSRQQEK). Positions 1-47 (MSARRVTLNTRVSRASTSTPVGGASTSSRVGATSPTSPTRTSRQQEK) are head. Positions 7-31 (TLNTRVSRASTSTPVGGASTSSRVG) are enriched in polar residues. The segment covering 33–42 (TSPTSPTRTS) has biased composition (low complexity). Ser34 is subject to Phosphoserine. One can recognise an IF rod domain in the interval 46–402 (EKEELQHLND…KLLCGEERRL (357 aa)). Positions 47-85 (KEELQHLNDRLACYIDRMRNLENENSRLTQELNLAQDTV) are coil 1A. The tract at residues 86-95 (NRETSNLKAV) is linker 1. The coil 1B stretch occupies residues 96–233 (YEKELAAARK…QVHTQELTET (138 aa)). Residues 234–257 (RSRRQIEISEIDGRLSRQYEAKLQ) are linker 2. Residues 258–403 (QSLQELRDQY…LLCGEERRLN (146 aa)) are coil 2. The tract at residues 404-458 (IESPGRPTTDSGISSNGSHLTASASSRSGRVTPSGRRSATPGISGSSAVKRRRTV) is disordered. The interval 404 to 621 (IESPGRPTTD…GVRSLFSLLF (218 aa)) is tail. 2 positions are modified to phosphoserine: Ser406 and Ser441. Residues 409–450 (RPTTDSGISSNGSHLTASASSRSGRVTPSGRRSATPGISGSS) are compositionally biased toward polar residues. The residue at position 443 (Thr443) is a Phosphothreonine. Residues 453–458 (KRRRTV) carry the Nuclear localization signal motif. Residues 468 to 582 (SEYSVNAAAK…EDVASYDRVR (115 aa)) enclose the LTD domain. Residues 585–605 (VSSHTSRHRSSGTPSTGFTLG) are disordered.

This sequence belongs to the intermediate filament family. Interacts with MAN1. First detected from late stage 12 in the oenocytes, abdominal segments, hindgut and posterior spiracles, with expression increasing in stage 13 (at protein level). In stage 14, also becomes detectable in the foregut (at protein level). Stage 15 shows expression in the epidermis, dorsal longitudinal trunk, pharynx, esophagus and proventriculus, with the dorsal pharyngeal musculature showing expression in late stage 15 (at protein level). In stage 16 embryos, also detected in the exit glia with increasing expression in the somatic musculature (at protein level). Also detected in the visceral mesoderm but not in the midgut or central nervous system until the end of embryogenesis (at protein level). In third instar larvae, detectable at varying levels in all cell types (at protein level). Expressed in spermatocytes (at protein level).

The protein localises to the nucleus. It localises to the nucleus lamina. Lamins are components of the nuclear lamina, a fibrous layer on the nucleoplasmic side of the inner nuclear membrane, which is thought to provide a framework for the nuclear envelope and may also interact with chromatin. In spermatocytes, regulates cytokinesis during meiosis. The chain is Lamin-C (LamC) from Drosophila melanogaster (Fruit fly).